The following is a 290-amino-acid chain: Diaminopimelate epimerase (290 aa).

Residues Asn17, Gln49, and Asn69 each contribute to the substrate site. Cys78 functions as the Proton donor in the catalytic mechanism. Substrate-binding positions include 79–80 (GN), Asn165, Asn198, and 216–217 (ER). Cys225 acts as the Proton acceptor in catalysis. 226-227 (GS) is a substrate binding site.

The protein belongs to the diaminopimelate epimerase family. As to quaternary structure, homodimer.

The protein localises to the cytoplasm. It catalyses the reaction (2S,6S)-2,6-diaminopimelate = meso-2,6-diaminopimelate. It functions in the pathway amino-acid biosynthesis; L-lysine biosynthesis via DAP pathway; DL-2,6-diaminopimelate from LL-2,6-diaminopimelate: step 1/1. Catalyzes the stereoinversion of LL-2,6-diaminopimelate (L,L-DAP) to meso-diaminopimelate (meso-DAP), a precursor of L-lysine and an essential component of the bacterial peptidoglycan. The protein is Diaminopimelate epimerase of Methylocella silvestris (strain DSM 15510 / CIP 108128 / LMG 27833 / NCIMB 13906 / BL2).